The chain runs to 564 residues: Ovochymase-2 (564 aa).

A signal peptide spans 1–22; that stretch reads MLISRNKLILLLGIVFFERGKS. Residues 23–51 constitute a propeptide, activation peptide; sequence ATLSLPKAPSCGQSLVKVQPWNYFNIFSR. The 248-residue stretch at 52–299 folds into the Peptidase S1 domain; that stretch reads ILGGSQVEKG…VLPWIHEHIQ (248 aa). A disulfide bridge links Cys77 with Cys93. Residue His92 is the Charge relay system of the active site. Asn104 carries an N-linked (GlcNAc...) asparagine glycan. Position 119 (Glu119) interacts with Ca(2+). The active-site Charge relay system is the Asp142. Cystine bridges form between Cys176-Cys246, Cys207-Cys225, Cys236-Cys265, Cys311-Cys341, and Cys365-Cys384. The active-site Charge relay system is Ser240. 2 consecutive CUB domains span residues 311–421 and 431–543; these read CSEQ…YKAL and CSYL…VSFI. N-linked (GlcNAc...) asparagine glycans are attached at residues Asn415 and Asn451. 2 cysteine pairs are disulfide-bonded: Cys431-Cys458 and Cys485-Cys506. N-linked (GlcNAc...) asparagine glycosylation occurs at Asn530.

The protein belongs to the peptidase S1 family.

It localises to the secreted. Its function is as follows. May be required for sperm ADAM3 processing and consequential sperm fertilizing ability. In vitro, has an endopeptidase activity. This chain is Ovochymase-2, found in Homo sapiens (Human).